Here is a 510-residue protein sequence, read N- to C-terminus: Transcriptional regulatory protein GAT1 (510 aa).

The residue at position 167 (Ser167) is a Phosphoserine. Low complexity predominate over residues 220-256 (NHSHNSSHNNNSPSIANNTNANTNTNTSASTNTNSPL). Disordered regions lie at residues 220-311 (NHSH…IKCS) and 358-383 (QRSS…AAGK). Ser262 and Ser270 each carry phosphoserine. Basic residues predominate over residues 274 to 287 (SSVRKKKPALKKIK). Positions 294 to 306 (SSATPPSNTSSNP) are enriched in low complexity. The GATA-type zinc-finger motif lies at 310–334 (CSNCTTSTTPLWRKDPKGLPLCNAC). Residue Thr369 is modified to Phosphothreonine. Ser399 and Ser418 each carry phosphoserine.

The protein localises to the nucleus. Positive regulator of multiple nitrogen catabolic genes. This chain is Transcriptional regulatory protein GAT1 (GAT1), found in Saccharomyces cerevisiae (strain ATCC 204508 / S288c) (Baker's yeast).